The primary structure comprises 208 residues: FMN-dependent NADH:quinone oxidoreductase (208 aa).

99 to 102 lines the FMN pocket; that stretch reads MWNF.

This sequence belongs to the azoreductase type 1 family. As to quaternary structure, homodimer. FMN is required as a cofactor.

The catalysed reaction is 2 a quinone + NADH + H(+) = 2 a 1,4-benzosemiquinone + NAD(+). The enzyme catalyses N,N-dimethyl-1,4-phenylenediamine + anthranilate + 2 NAD(+) = 2-(4-dimethylaminophenyl)diazenylbenzoate + 2 NADH + 2 H(+). In terms of biological role, quinone reductase that provides resistance to thiol-specific stress caused by electrophilic quinones. Functionally, also exhibits azoreductase activity. Catalyzes the reductive cleavage of the azo bond in aromatic azo compounds to the corresponding amines. The chain is FMN-dependent NADH:quinone oxidoreductase from Brevibacillus brevis (strain 47 / JCM 6285 / NBRC 100599).